The primary structure comprises 98 residues: Bombyxin E-1 (98 aa).

An N-terminal signal peptide occupies residues Met1 to Ala19. The residue at position 20 (Gln20) is a Pyrrolidone carboxylic acid. 3 disulfide bridges follow: Cys29-Cys85, Cys41-Cys98, and Cys84-Cys89. A propeptide spans Ser50–Ile75 (c peptide like).

Belongs to the insulin family. As to quaternary structure, heterodimer of a B chain and an A chain linked by two disulfide bonds.

Its subcellular location is the secreted. In terms of biological role, PTTH is a brain peptide responsible for activation of prothoracic glands to produce ecdysone in insects. The chain is Bombyxin E-1 (BBXE1) from Bombyx mori (Silk moth).